Here is a 364-residue protein sequence, read N- to C-terminus: Aminomethyltransferase (364 aa).

The protein belongs to the GcvT family. As to quaternary structure, the glycine cleavage system is composed of four proteins: P, T, L and H.

It carries out the reaction N(6)-[(R)-S(8)-aminomethyldihydrolipoyl]-L-lysyl-[protein] + (6S)-5,6,7,8-tetrahydrofolate = N(6)-[(R)-dihydrolipoyl]-L-lysyl-[protein] + (6R)-5,10-methylene-5,6,7,8-tetrahydrofolate + NH4(+). Its function is as follows. The glycine cleavage system catalyzes the degradation of glycine. The polypeptide is Aminomethyltransferase (Anoxybacillus flavithermus (strain DSM 21510 / WK1)).